Consider the following 1032-residue polypeptide: GPI ethanolamine phosphate transferase 1 (1032 aa).

At 1–6 (MARLGR) the chain is on the cytoplasmic side. The chain crosses the membrane as a helical span at residues 7 to 27 (FGFLALAVVFHLIYAYSIFDI). The Lumenal segment spans residues 28–468 (YFVSPIVSGM…LQTYDWLFLR (441 aa)). Residues asparagine 150 and asparagine 435 are each glycosylated (N-linked (GlcNAc...) asparagine). The helical transmembrane segment at 469 to 489 (TIITFGYLGWIAYALTTVIDL) threads the bilayer. Residues 490–500 (HVLHRTSDSKR) are Cytoplasmic-facing. The chain crosses the membrane as a helical span at residues 501–521 (TVGSTIFFTSILAALFSVLLY). Over 522–523 (QK) the chain is Lumenal. A helical membrane pass occupies residues 524 to 544 (SSWQYYVYGAFPIFFWEEVFA). Residues 545-564 (RRKALIAGREILLGHVRSFG) are Cytoplasmic-facing. Residues 565–585 (GYIASGFQLVAFVAVLEALLM) traverse the membrane as a helical segment. Residues 586 to 596 (RHQVQSYFHRE) are Lumenal-facing. A helical transmembrane segment spans residues 597–617 (IYTVCFVLGSFWPILYGVDFV). Residues 618 to 622 (RQNTV) lie on the Cytoplasmic side of the membrane. Residues 623–643 (LSATWAVGCSLMSTFTLLPVI) form a helical membrane-spanning segment. Residues 644–647 (KVEN) lie on the Lumenal side of the membrane. The helical transmembrane segment at 648-668 (INTITYGALLMFFTGLFYLLF) threads the bilayer. The Cytoplasmic portion of the chain corresponds to 669-688 (EDTILKHSKSSGHAPGAISS). A helical transmembrane segment spans residues 689–709 (LGSRVIMGMQVGMVLLALIVT). Residues 710-722 (RSSVSSLQAKQGL) lie on the Lumenal side of the membrane. A helical transmembrane segment spans residues 723–743 (PFGNQVVGWFVLVASLVLPFF). Topologically, residues 744-766 (HRLYPNSHYLHRLMVLFLTFSPT) are cytoplasmic. Residues 767-787 (FIILTISYEGLFYFVFCMTLV) traverse the membrane as a helical segment. At 788 to 841 (TWVRLEHAIYVYTARSSAHYGGNNTVPKKPGLNATAVIDGQEYRYRRLGLADTR) the chain is on the lumenal side. 2 N-linked (GlcNAc...) asparagine glycosylation sites follow: asparagine 810 and asparagine 820. The chain crosses the membrane as a helical span at residues 842 to 862 (VALFFFFLLQSAFFSTGNIAS). The Cytoplasmic portion of the chain corresponds to 863–884 (VSSFSLESVFRLIPVFSPFSQS). Residues 885–905 (ALLILKLLIPFAIISANLGIL) traverse the membrane as a helical segment. Residues 906 to 914 (NRRLEVAPS) are Lumenal-facing. Residues 915 to 935 (ALFMVVMSISDVMTLNFFYMV) traverse the membrane as a helical segment. Residues 936–951 (RDEGSWLDIGTTISHF) are Cytoplasmic-facing. Residues 952-972 (LIASFLCTFVAGLEFLSEVFI) form a helical membrane-spanning segment. The Lumenal segment spans residues 973–1032 (SGVDFGPTTKAIGASITKTVGGTAGSDVVDSQSGPEDAANSKKAEGLEGSETIRQNGGSV). The segment at 994-1032 (GTAGSDVVDSQSGPEDAANSKKAEGLEGSETIRQNGGSV) is disordered.

Belongs to the PIGG/PIGN/PIGO family. PIGN subfamily.

The protein localises to the endoplasmic reticulum membrane. Its pathway is glycolipid biosynthesis; glycosylphosphatidylinositol-anchor biosynthesis. Ethanolamine phosphate transferase involved in glycosylphosphatidylinositol-anchor biosynthesis. Transfers ethanolamine phosphate to the first alpha-1,4-linked mannose of the glycosylphosphatidylinositol precursor of GPI-anchor. The polypeptide is GPI ethanolamine phosphate transferase 1 (mcd4) (Aspergillus fumigatus (strain ATCC MYA-4609 / CBS 101355 / FGSC A1100 / Af293) (Neosartorya fumigata)).